The following is a 202-amino-acid chain: Superoxide dismutase [Fe] (202 aa).

Histidine 30, histidine 78, aspartate 164, and histidine 168 together coordinate Fe cation.

It belongs to the iron/manganese superoxide dismutase family. In terms of assembly, homotetramer. It depends on Fe cation as a cofactor.

The enzyme catalyses 2 superoxide + 2 H(+) = H2O2 + O2. Its function is as follows. Destroys superoxide anion radicals which are normally produced within the cells and which are toxic to biological systems. This is Superoxide dismutase [Fe] (sod) from Methanothermobacter marburgensis (strain ATCC BAA-927 / DSM 2133 / JCM 14651 / NBRC 100331 / OCM 82 / Marburg) (Methanobacterium thermoautotrophicum).